The sequence spans 152 residues: Transcription elongation factor Spt5 (152 aa).

The 30-residue stretch at 98–127 (EGDLVEVVSGPFRGMQAQVVKVTEGKGEVV) folds into the KOW domain.

This sequence belongs to the archaeal Spt5 family. In terms of assembly, heterodimer composed of Spt4 and Spt5. Interacts with RNA polymerase (RNAP).

Its function is as follows. Stimulates transcription elongation. The protein is Transcription elongation factor Spt5 of Acidianus ambivalens (Desulfurolobus ambivalens).